Reading from the N-terminus, the 997-residue chain is Sorting nexin-19 (997 aa).

In terms of domain architecture, PXA spans 95 to 273 (ERQLEQEINR…ILVSIFSKYR (179 aa)). Disordered stretches follow at residues 313–333 (SSPA…SPEI) and 413–437 (GALE…APGT). A compositionally biased stretch (acidic residues) spans 422–435 (GSECMEGAEAEEAP). The 131-residue stretch at 538–668 (LRITGTITAR…EFLALNTDAR (131 aa)) folds into the PX domain. 2 residues coordinate a 1,2-diacyl-sn-glycero-3-phospho-(1D-myo-inositol-3-phosphate): Arg587 and Arg634. Positions 697–728 (FPRSEPQSPTEELSEAENESKPQTEGKKASKS) are disordered. Basic and acidic residues predominate over residues 714–724 (NESKPQTEGKK).

This sequence belongs to the sorting nexin family. Interacts with PTPRN.

It localises to the early endosome membrane. It is found in the cytoplasmic vesicle membrane. In terms of biological role, plays a role in intracellular vesicle trafficking and exocytosis. May play a role in maintaining insulin-containing dense core vesicles in pancreatic beta-cells and in preventing their degradation. May play a role in insulin secretion. Interacts with membranes containing phosphatidylinositol 3-phosphate (PtdIns(3P)). The chain is Sorting nexin-19 from Mus musculus (Mouse).